A 58-amino-acid polypeptide reads, in one-letter code: Preprotein translocase subunit SecG (58 aa).

Residues 1–33 lie on the Cytoplasmic side of the membrane; it reads MARRRKYEGLNPFVAAGLIKFSEEGELEKIKLS. Residues 34–55 form a helical membrane-spanning segment; sequence PKAAIAISLAIIAAILALNLLL. The Extracellular segment spans residues 56-58; that stretch reads PPP.

Belongs to the SEC61-beta family. Component of the protein translocase complex. Heterotrimer consisting of alpha (SecY), beta (SecG) and gamma (SecE) subunits. Can form oligomers of the heterotrimer.

Its subcellular location is the cell membrane. Involved in protein export. The function of the beta subunit is unknown, but it may be involved in stabilization of the trimeric complex. This chain is Preprotein translocase subunit SecG, found in Pyrobaculum calidifontis (strain DSM 21063 / JCM 11548 / VA1).